We begin with the raw amino-acid sequence, 353 residues long: Uroporphyrinogen decarboxylase (353 aa).

Residues 35-39 (RQAGR), F54, D84, Y160, S215, and H329 each bind substrate.

This sequence belongs to the uroporphyrinogen decarboxylase family. In terms of assembly, homodimer.

It localises to the cytoplasm. It catalyses the reaction uroporphyrinogen III + 4 H(+) = coproporphyrinogen III + 4 CO2. The protein operates within porphyrin-containing compound metabolism; protoporphyrin-IX biosynthesis; coproporphyrinogen-III from 5-aminolevulinate: step 4/4. In terms of biological role, catalyzes the decarboxylation of four acetate groups of uroporphyrinogen-III to yield coproporphyrinogen-III. In Staphylococcus epidermidis (strain ATCC 12228 / FDA PCI 1200), this protein is Uroporphyrinogen decarboxylase.